The chain runs to 388 residues: Chorismate synthase (388 aa).

NADP(+)-binding residues include arginine 39 and arginine 45. Positions 95–118 are disordered; the sequence is EKNEKSRRVSRPRPGHADLVGGMK. Residues 130 to 132, 251 to 252, glycine 296, 311 to 315, and arginine 337 each bind FMN; these read RSS, NA, and KPIPT.

Belongs to the chorismate synthase family. Homotetramer. FMNH2 is required as a cofactor.

It carries out the reaction 5-O-(1-carboxyvinyl)-3-phosphoshikimate = chorismate + phosphate. The protein operates within metabolic intermediate biosynthesis; chorismate biosynthesis; chorismate from D-erythrose 4-phosphate and phosphoenolpyruvate: step 7/7. In terms of biological role, catalyzes the anti-1,4-elimination of the C-3 phosphate and the C-6 proR hydrogen from 5-enolpyruvylshikimate-3-phosphate (EPSP) to yield chorismate, which is the branch point compound that serves as the starting substrate for the three terminal pathways of aromatic amino acid biosynthesis. This reaction introduces a second double bond into the aromatic ring system. This is Chorismate synthase from Listeria monocytogenes serotype 4b (strain F2365).